The chain runs to 244 residues: uncharacterized protein (244 aa).

The region spanning 12–80 (VALWRQIADR…QGRGTMIERK (69 aa)) is the HTH gntR-type domain. The H-T-H motif DNA-binding region spans 40 to 59 (ETALAAEFGVNRHTVRSALA).

This is an uncharacterized protein from Rhizobium meliloti (strain 1021) (Ensifer meliloti).